The chain runs to 161 residues: Large ribosomal subunit protein eL21 (161 aa).

Belongs to the eukaryotic ribosomal protein eL21 family.

The polypeptide is Large ribosomal subunit protein eL21 (RPL21) (Cyanophora paradoxa).